Here is an 87-residue protein sequence, read N- to C-terminus: ParB-like nuclease domain-containing protein YnaK (87 aa).

The protein is ParB-like nuclease domain-containing protein YnaK (ynaK) of Escherichia coli (strain K12).